We begin with the raw amino-acid sequence, 601 residues long: Elongation factor 4 (601 aa).

The tr-type G domain maps to 7–189 (SHIRNFSIIA…SIVQLVPPPQ (183 aa)). Residues 19–24 (DHGKST) and 136–139 (NKID) each bind GTP.

It belongs to the TRAFAC class translation factor GTPase superfamily. Classic translation factor GTPase family. LepA subfamily.

Its subcellular location is the cell inner membrane. The enzyme catalyses GTP + H2O = GDP + phosphate + H(+). Required for accurate and efficient protein synthesis under certain stress conditions. May act as a fidelity factor of the translation reaction, by catalyzing a one-codon backward translocation of tRNAs on improperly translocated ribosomes. Back-translocation proceeds from a post-translocation (POST) complex to a pre-translocation (PRE) complex, thus giving elongation factor G a second chance to translocate the tRNAs correctly. Binds to ribosomes in a GTP-dependent manner. This is Elongation factor 4 from Trichodesmium erythraeum (strain IMS101).